The chain runs to 197 residues: MSNVLVLKSSILGDYSQSNGLIDHLVSSWGDSVSSVIERDLVATPIPVLDGEIAGGLRGGDTLTARQEEALALSDMLINELQNSDTIVIAAPMYNFSVPTQLKNWFDIIARAGVTFSYTENGPVGLITGKKVIVVTTRGGMHKDGPTDTMVPYLKTILGFIGLTDVEFVYGEALAMGEEMAAKGITNAKSALEKISA.

Residues serine 10, 16 to 18 (SQS), 93 to 96 (MYNF), and 137 to 140 (TRGG) each bind FMN.

This sequence belongs to the azoreductase type 1 family. In terms of assembly, homodimer. The cofactor is FMN.

It catalyses the reaction 2 a quinone + NADH + H(+) = 2 a 1,4-benzosemiquinone + NAD(+). The catalysed reaction is N,N-dimethyl-1,4-phenylenediamine + anthranilate + 2 NAD(+) = 2-(4-dimethylaminophenyl)diazenylbenzoate + 2 NADH + 2 H(+). Its function is as follows. Quinone reductase that provides resistance to thiol-specific stress caused by electrophilic quinones. Also exhibits azoreductase activity. Catalyzes the reductive cleavage of the azo bond in aromatic azo compounds to the corresponding amines. This Photobacterium profundum (strain SS9) protein is FMN-dependent NADH:quinone oxidoreductase 1.